The primary structure comprises 490 residues: Mitochondrial-processing peptidase subunit beta (490 aa).

The transit peptide at 1–46 (MAAAAVARAVLFSAARRRLCGFTERLLIGGAAGRSLYFGGNRLRST) directs the protein to the mitochondrion. Histidine 102 contributes to the Zn(2+) binding site. Glutamate 105 (proton acceptor) is an active-site residue. The Zn(2+) site is built by histidine 106 and glutamate 182.

This sequence belongs to the peptidase M16 family. As to quaternary structure, heterodimer of PMPCA (alpha) and PMPCB (beta) subunits, forming the mitochondrial processing protease (MPP) in which PMPCA is involved in substrate recognition and binding and PMPCB is the catalytic subunit. Zn(2+) serves as cofactor.

The protein resides in the mitochondrion matrix. It catalyses the reaction Release of N-terminal transit peptides from precursor proteins imported into the mitochondrion, typically with Arg in position P2.. With respect to regulation, binding to PMPCA is required for catalytic activity. Catalytic subunit of the essential mitochondrial processing protease (MPP), which cleaves the mitochondrial sequence off newly imported precursors proteins. Preferentially, cleaves after an arginine at position P2. Required for PINK1 turnover by coupling PINK1 mitochondrial import and cleavage, which results in subsequent PINK1 proteolysis. The sequence is that of Mitochondrial-processing peptidase subunit beta (PMPCB) from Bos taurus (Bovine).